Here is a 207-residue protein sequence, read N- to C-terminus: Large ribosomal subunit protein uL4 (207 aa).

The segment at 50–75 (KTKTVSEVSGTTKKPFKQKGTGNARQ) is disordered.

It belongs to the universal ribosomal protein uL4 family. As to quaternary structure, part of the 50S ribosomal subunit.

One of the primary rRNA binding proteins, this protein initially binds near the 5'-end of the 23S rRNA. It is important during the early stages of 50S assembly. It makes multiple contacts with different domains of the 23S rRNA in the assembled 50S subunit and ribosome. Functionally, forms part of the polypeptide exit tunnel. This chain is Large ribosomal subunit protein uL4, found in Rickettsia felis (strain ATCC VR-1525 / URRWXCal2) (Rickettsia azadi).